A 163-amino-acid polypeptide reads, in one-letter code: Phosphopantetheine adenylyltransferase (163 aa).

Residue Ser-10 coordinates substrate. ATP is bound by residues 10–11 (SF) and His-18. Substrate is bound by residues Lys-42, Leu-74, and Arg-88. ATP-binding positions include 89–91 (GLR), Glu-99, and 124–130 (YSFLSSS).

It belongs to the bacterial CoaD family. In terms of assembly, homohexamer. The cofactor is Mg(2+).

The protein resides in the cytoplasm. The catalysed reaction is (R)-4'-phosphopantetheine + ATP + H(+) = 3'-dephospho-CoA + diphosphate. Its pathway is cofactor biosynthesis; coenzyme A biosynthesis; CoA from (R)-pantothenate: step 4/5. Functionally, reversibly transfers an adenylyl group from ATP to 4'-phosphopantetheine, yielding dephospho-CoA (dPCoA) and pyrophosphate. This chain is Phosphopantetheine adenylyltransferase, found in Bacillus mycoides (strain KBAB4) (Bacillus weihenstephanensis).